Consider the following 1336-residue polypeptide: Putative botulinum-like toxin Wo (1336 aa).

Residues 1-476 (MDVLEMFDVN…VAGMQRMVSL (476 aa)) are has protease activity. H250 contacts Zn(2+). E251 is a catalytic residue. 2 residues coordinate Zn(2+): H254 and E296.

The protein belongs to the peptidase M27 family. Zn(2+) serves as cofactor.

It carries out the reaction Limited hydrolysis of proteins of the neuroexocytosis apparatus, synaptobrevins, SNAP25 or syntaxin. No detected action on small molecule substrates.. Its activity is regulated as follows. Inhibited by EDTA and 1,10-phenanthroline. Functionally, when overexpressed the N-terminus (residues 1-476) cleaves rat synaptobrevin-2/VAMP2 between '89-Trp-|-Trp-90' in vitro. This releases the cytoplasmic domain of VAMP2 from the synaptic vesicle membrane, which would prevent the assembly of the trans-SNARE complex on the membrane and thus prevent vesicle-target membrane fusion and neurotransmitter release. This chain is Putative botulinum-like toxin Wo, found in Weissella oryzae (strain DSM 25784 / JCM 18191 / LMG 30913 / SG25).